The primary structure comprises 158 residues: Transcription elongation factor GreA (158 aa).

The stretch at 49-73 (QAAREQQGFIEGRIKEIEAKLANAQ) forms a coiled coil.

This sequence belongs to the GreA/GreB family.

Its function is as follows. Necessary for efficient RNA polymerase transcription elongation past template-encoded arresting sites. The arresting sites in DNA have the property of trapping a certain fraction of elongating RNA polymerases that pass through, resulting in locked ternary complexes. Cleavage of the nascent transcript by cleavage factors such as GreA or GreB allows the resumption of elongation from the new 3'terminus. GreA releases sequences of 2 to 3 nucleotides. This Methylococcus capsulatus (strain ATCC 33009 / NCIMB 11132 / Bath) protein is Transcription elongation factor GreA.